The following is a 230-amino-acid chain: MDLKPIVALDLPDPSEALKLVHLLRPHIDFFKVGSQLFLAGGTDIIRRIIDCGADVFLDLKFHDIPRTVFRAVTEVVKLKVKFTTVHILGGREMLKEALEASAGSDTEILGVTVLTSMDDRGLESIGIAHAVEEEVLLLASMALEVGLRGIVCSGKELPLLGKLKKRASILVVPGIRWRGAAAYDQKRIIEPGEAKKGGATHVVVGRPILEAHDKVGLVQKLLCELNAIN.

Substrate contacts are provided by residues aspartate 10, lysine 32, 59–68, threonine 116, arginine 177, glutamine 186, glycine 206, and arginine 207; that span reads DLKFHDIPRT. Catalysis depends on lysine 61, which acts as the Proton donor.

The protein belongs to the OMP decarboxylase family. Type 1 subfamily. As to quaternary structure, homodimer.

It carries out the reaction orotidine 5'-phosphate + H(+) = UMP + CO2. It participates in pyrimidine metabolism; UMP biosynthesis via de novo pathway; UMP from orotate: step 2/2. In terms of biological role, catalyzes the decarboxylation of orotidine 5'-monophosphate (OMP) to uridine 5'-monophosphate (UMP). This Methylacidiphilum infernorum (isolate V4) (Methylokorus infernorum (strain V4)) protein is Orotidine 5'-phosphate decarboxylase.